A 115-amino-acid polypeptide reads, in one-letter code: Ribonuclease P protein component (115 aa).

Belongs to the RnpA family. As to quaternary structure, consists of a catalytic RNA component (M1 or rnpB) and a protein subunit.

It catalyses the reaction Endonucleolytic cleavage of RNA, removing 5'-extranucleotides from tRNA precursor.. In terms of biological role, RNaseP catalyzes the removal of the 5'-leader sequence from pre-tRNA to produce the mature 5'-terminus. It can also cleave other RNA substrates such as 4.5S RNA. The protein component plays an auxiliary but essential role in vivo by binding to the 5'-leader sequence and broadening the substrate specificity of the ribozyme. This is Ribonuclease P protein component from Macrococcus caseolyticus (strain JCSC5402) (Macrococcoides caseolyticum).